Here is a 182-residue protein sequence, read N- to C-terminus: Protein YIPF6 homolog (182 aa).

The Cytoplasmic segment spans residues M1–D45. A helical membrane pass occupies residues W46–A66. At E67–K70 the chain is on the lumenal side. Residues A71–N91 form a helical membrane-spanning segment. Over G92–S104 the chain is Cytoplasmic. Residues V105–I125 traverse the membrane as a helical segment. At Q126–K133 the chain is on the lumenal side. Residues L134–S154 traverse the membrane as a helical segment. Topologically, residues S155–R161 are cytoplasmic. A helical membrane pass occupies residues L162–Q182.

The protein belongs to the YIP1 family.

The protein resides in the golgi apparatus membrane. This Dictyostelium discoideum (Social amoeba) protein is Protein YIPF6 homolog (yipf6).